The chain runs to 256 residues: MTPDVRPLVAGNWKMNGTRASLDQIKAIAEGVRPPLADKVEALICPPTTLLYVATALCTDSPLAIGAQDCHQKPSGAHTGDISAEMIADSFGTYVIVGHSERRTDHAETDHLVRAKAEAAFAAELTAIICIGETADERRAGQELDVIKRQLSASVPDAATAENTVIAYEPIWAIGTGVTPTSGDVEKAHAFMRAELVSRFGDEGRKMRLLYGGSVKPANAGELLGIANVDGALIGGASLKAADFLAIYRAYEALLA.

Residue 12-14 (NWK) participates in substrate binding. The active-site Electrophile is His-99. Glu-169 (proton acceptor) is an active-site residue. Residues Gly-175, Ser-214, and 235 to 236 (GG) each bind substrate.

It belongs to the triosephosphate isomerase family. As to quaternary structure, homodimer.

The protein resides in the cytoplasm. The catalysed reaction is D-glyceraldehyde 3-phosphate = dihydroxyacetone phosphate. Its pathway is carbohydrate biosynthesis; gluconeogenesis. It participates in carbohydrate degradation; glycolysis; D-glyceraldehyde 3-phosphate from glycerone phosphate: step 1/1. Its function is as follows. Involved in the gluconeogenesis. Catalyzes stereospecifically the conversion of dihydroxyacetone phosphate (DHAP) to D-glyceraldehyde-3-phosphate (G3P). The protein is Triosephosphate isomerase of Rhizobium etli (strain ATCC 51251 / DSM 11541 / JCM 21823 / NBRC 15573 / CFN 42).